The chain runs to 377 residues: Succinyl-diaminopimelate desuccinylase (377 aa).

H67 lines the Zn(2+) pocket. Residue D69 is part of the active site. D100 serves as a coordination point for Zn(2+). The active-site Proton acceptor is E134. The Zn(2+) site is built by E135, E163, and H349.

The protein belongs to the peptidase M20A family. DapE subfamily. As to quaternary structure, homodimer. The cofactor is Zn(2+). Co(2+) serves as cofactor.

The catalysed reaction is N-succinyl-(2S,6S)-2,6-diaminopimelate + H2O = (2S,6S)-2,6-diaminopimelate + succinate. It participates in amino-acid biosynthesis; L-lysine biosynthesis via DAP pathway; LL-2,6-diaminopimelate from (S)-tetrahydrodipicolinate (succinylase route): step 3/3. Functionally, catalyzes the hydrolysis of N-succinyl-L,L-diaminopimelic acid (SDAP), forming succinate and LL-2,6-diaminopimelate (DAP), an intermediate involved in the bacterial biosynthesis of lysine and meso-diaminopimelic acid, an essential component of bacterial cell walls. The chain is Succinyl-diaminopimelate desuccinylase from Haemophilus influenzae (strain 86-028NP).